Reading from the N-terminus, the 676-residue chain is Cysteine-rich receptor-like protein kinase 4 (676 aa).

Positions 1-16 (MSFFWLFPFLLHLSFA) are cleaved as a signal peptide. At 17-287 (DSLSPLSAPV…ISERGKGRNS (271 aa)) the chain is on the extracellular side. Gnk2-homologous domains follow at residues 31–135 (HLNH…HRNI) and 146–246 (ILLN…NYSF). N-linked (GlcNAc...) asparagine glycans are attached at residues asparagine 33, asparagine 46, asparagine 64, asparagine 152, asparagine 181, asparagine 243, and asparagine 248. The interval 252–279 (TRSSSPPSLPPRSTPQQQLKLAPPPLIS) is disordered. Asparagine 286 carries an N-linked (GlcNAc...) asparagine glycan. The chain crosses the membrane as a helical span at residues 288–308 (SVIIVVVVPIIALLLLFVAFF). Residues 309–676 (SLRAKKTRTN…DASITNVTPR (368 aa)) are Cytoplasmic-facing. One can recognise a Protein kinase domain in the interval 351-631 (FCETNKLGQG…QMLTTSSIAL (281 aa)). Residues 357–365 (LGQGGFGEV) and lysine 379 contribute to the ATP site. At tyrosine 424 the chain carries Phosphotyrosine. Aspartate 476 (proton acceptor) is an active-site residue. Threonine 516 is modified (phosphothreonine). Tyrosine 524 is subject to Phosphotyrosine.

This sequence belongs to the protein kinase superfamily. Ser/Thr protein kinase family. CRK subfamily.

It is found in the membrane. The catalysed reaction is L-seryl-[protein] + ATP = O-phospho-L-seryl-[protein] + ADP + H(+). The enzyme catalyses L-threonyl-[protein] + ATP = O-phospho-L-threonyl-[protein] + ADP + H(+). The polypeptide is Cysteine-rich receptor-like protein kinase 4 (CRK4) (Arabidopsis thaliana (Mouse-ear cress)).